The sequence spans 615 residues: DNA mismatch repair protein MutL (615 aa).

Residues 363–397 (FAEPAAREPVAPRYTPAPASGSRPAAPWPNAQPGY) are disordered. Over residues 364–391 (AEPAAREPVAPRYTPAPASGSRPAAPWP) the composition is skewed to low complexity.

The protein belongs to the DNA mismatch repair MutL/HexB family.

Functionally, this protein is involved in the repair of mismatches in DNA. It is required for dam-dependent methyl-directed DNA mismatch repair. May act as a 'molecular matchmaker', a protein that promotes the formation of a stable complex between two or more DNA-binding proteins in an ATP-dependent manner without itself being part of a final effector complex. The sequence is that of DNA mismatch repair protein MutL from Escherichia coli O9:H4 (strain HS).